Reading from the N-terminus, the 412-residue chain is Tyrosine--tRNA ligase (412 aa).

Tyr31 contributes to the L-tyrosine binding site. A 'HIGH' region motif is present at residues 36–45 (PTAPSLHIGH). The L-tyrosine site is built by Tyr162 and Gln166. Residues 222–226 (KIGKT) carry the 'KMSKS' region motif. Position 225 (Lys225) interacts with ATP. The S4 RNA-binding domain maps to 345–412 (KRWLDVVVQL…KKKKQVIDLN (68 aa)).

The protein belongs to the class-I aminoacyl-tRNA synthetase family. TyrS type 1 subfamily. As to quaternary structure, homodimer.

Its subcellular location is the cytoplasm. It catalyses the reaction tRNA(Tyr) + L-tyrosine + ATP = L-tyrosyl-tRNA(Tyr) + AMP + diphosphate + H(+). Functionally, catalyzes the attachment of tyrosine to tRNA(Tyr) in a two-step reaction: tyrosine is first activated by ATP to form Tyr-AMP and then transferred to the acceptor end of tRNA(Tyr). The sequence is that of Tyrosine--tRNA ligase from Chlamydia muridarum (strain MoPn / Nigg).